Consider the following 221-residue polypeptide: Probable septum site-determining protein MinC (221 aa).

Belongs to the MinC family. In terms of assembly, interacts with MinD and FtsZ.

Its function is as follows. Cell division inhibitor that blocks the formation of polar Z ring septums. Rapidly oscillates between the poles of the cell to destabilize FtsZ filaments that have formed before they mature into polar Z rings. Prevents FtsZ polymerization. The polypeptide is Probable septum site-determining protein MinC (Shewanella frigidimarina (strain NCIMB 400)).